Reading from the N-terminus, the 160-residue chain is 6,7-dimethyl-8-ribityllumazine synthase (160 aa).

5-amino-6-(D-ribitylamino)uracil-binding positions include Trp27, 59–61, and 81–83; these read AIE and VVI. 86-87 serves as a coordination point for (2S)-2-hydroxy-3-oxobutyl phosphate; that stretch reads QT. The Proton donor role is filled by His89. A 5-amino-6-(D-ribitylamino)uracil-binding site is contributed by Asn114. Arg128 lines the (2S)-2-hydroxy-3-oxobutyl phosphate pocket.

It belongs to the DMRL synthase family. As to quaternary structure, homopentamer.

The enzyme catalyses (2S)-2-hydroxy-3-oxobutyl phosphate + 5-amino-6-(D-ribitylamino)uracil = 6,7-dimethyl-8-(1-D-ribityl)lumazine + phosphate + 2 H2O + H(+). The protein operates within cofactor biosynthesis; riboflavin biosynthesis; riboflavin from 2-hydroxy-3-oxobutyl phosphate and 5-amino-6-(D-ribitylamino)uracil: step 1/2. Functionally, catalyzes the formation of 6,7-dimethyl-8-ribityllumazine by condensation of 5-amino-6-(D-ribitylamino)uracil with 3,4-dihydroxy-2-butanone 4-phosphate. This is the penultimate step in the biosynthesis of riboflavin. The protein is 6,7-dimethyl-8-ribityllumazine synthase of Mycobacterium avium (strain 104).